We begin with the raw amino-acid sequence, 358 residues long: uncharacterized protein (358 aa).

It belongs to the methyltransferase superfamily.

This is an uncharacterized protein from Mycobacterium tuberculosis (strain CDC 1551 / Oshkosh).